The primary structure comprises 655 residues: RalA-binding protein 1 (655 aa).

The interval M1–D158 is disordered. Residue T2 is modified to N-acetylthreonine. Residues L24–I33 show a composition bias toward polar residues. S29, S30, and S34 each carry phosphoserine. Position 44 is a phosphothreonine (T44). Residues S48 and S62 each carry the phosphoserine modification. Basic and acidic residues predominate over residues D52 to H68. ATP is bound at residue G69–K74. Over residues G69–E79 the composition is skewed to basic residues. Phosphoserine occurs at positions 92 and 93. Positions K102–S118 are enriched in basic residues. Residues K102–K119 form a nuclear localization signal region. Basic and acidic residues predominate over residues K119 to T155. Residues L154–Y219 form a mediates association with membranes and could form transmembrane domains region. One can recognise a Rho-GAP domain in the interval I192 to L380. Residues R403–M499 form a mediates interaction with RALA and RALB region. G418–K425 provides a ligand contact to ATP. Phosphoserine occurs at positions 461 and 463. The tract at residues E500–I655 is mediates interaction with REPS1 and REPS2. Disordered stretches follow at residues Q525–E551 and A601–I655. A compositionally biased stretch (acidic residues) spans E536 to E551. A compositionally biased stretch (basic and acidic residues) spans G624–I655. S645 carries the post-translational modification Phosphoserine.

In terms of assembly, interacts with the GTP-bound form of RALA (via effector domain); during mitosis, recruits RALBP1 to the mitochondrion where it promotes DNM1L phosphorylation and mitochondrial fission. Interacts with DNM1L; mediates its mitotic kinase cyclin B-CDK1-mediated phosphorylation during mitosis to promote mitochondrial fission. Interacts with the mitotic kinase cyclin B-CDK1 during mitosis. Interacts with the GTP-bound form of RALB (via effector domain). Interacts with REPS1; the interaction is direct and does not affect RALA-binding nor GTPase activator activity of RALBP1. Interacts with REPS2; the interaction is direct and does not affect RALA-binding nor GTPase activator activity of RALBP1. Interacts with EPN1, NUMB and TFAP2A during interphase and mitosis. Interacts with AP2M1; as part of the AP2 complex. Interacts with CDC42. Interacts with RAC1. Tyrosine-phosphorylated upon stimulation of cells with EGF. Post-translationally, may undergo proteolytic cleavage to give peptides which reassemble to form a transporter complex. In terms of tissue distribution, expressed ubiquitously but at low levels. Shows a strong expression in the erythrocytes.

Its subcellular location is the cell membrane. The protein localises to the cytoplasm. It is found in the cytosol. It localises to the cytoskeleton. The protein resides in the spindle pole. Its subcellular location is the nucleus. The protein localises to the mitochondrion. It carries out the reaction an S-substituted glutathione(in) + ATP + H2O = an S-substituted glutathione(out) + ADP + phosphate + H(+). The catalysed reaction is ATP + H2O + xenobioticSide 1 = ADP + phosphate + xenobioticSide 2.. The enzyme catalyses leukotriene C4(in) + ATP + H2O = leukotriene C4(out) + ADP + phosphate + H(+). Functionally, multifunctional protein that functions as a downstream effector of RALA and RALB. As a GTPase-activating protein/GAP can inactivate CDC42 and RAC1 by stimulating their GTPase activity. As part of the Ral signaling pathway, may also regulate ligand-dependent EGF and insulin receptors-mediated endocytosis. During mitosis, may act as a scaffold protein in the phosphorylation of EPSIN/EPN1 by the mitotic kinase cyclin B-CDK1, preventing endocytosis during that phase of the cell cycle. During mitosis, also controls mitochondrial fission as an effector of RALA. Recruited to mitochondrion by RALA, acts as a scaffold to foster the mitotic kinase cyclin B-CDK1-mediated phosphorylation and activation of DNM1L. Could also function as a primary ATP-dependent active transporter for glutathione conjugates of electrophiles. May also actively catalyze the efflux of a wide range of substrates including xenobiotics like doxorubicin (DOX) contributing to cell multidrug resistance. The chain is RalA-binding protein 1 from Homo sapiens (Human).